The chain runs to 83 residues: MKTLLLTLVVVTIVCLDLGHTLLCHNQQSSTSPTTTCCSGGESKCYKKRWPTHRGTITERGCGCPTVKKGIELHCCTTDQCNL.

Positions 1–21 (MKTLLLTLVVVTIVCLDLGHT) are cleaved as a signal peptide. Intrachain disulfides connect Cys-24–Cys-45, Cys-38–Cys-62, Cys-64–Cys-75, and Cys-76–Cys-81.

The protein belongs to the three-finger toxin family. Short-chain subfamily. Type I alpha-neurotoxin sub-subfamily. As to expression, expressed by the venom gland.

It localises to the secreted. In terms of biological role, binds to muscle nicotinic acetylcholine receptor (nAChR) and inhibit acetylcholine from binding to the receptor, thereby impairing neuromuscular transmission. This is Three-finger toxin W-IV from Walterinnesia aegyptia (Desert black snake).